Here is a 1137-residue protein sequence, read N- to C-terminus: DNA-directed RNA polymerase III subunit RPC2 (1137 aa).

Residues 1084–1099 (DVCRTCGRMAYCSWCH) form a C4-type zinc finger. Zn(2+)-binding residues include Cys1086, Cys1089, Cys1098, and Cys1101.

Belongs to the RNA polymerase beta chain family. As to quaternary structure, component of the RNA polymerase III (Pol III) complex consisting of 17 subunits.

The protein localises to the nucleus. It carries out the reaction RNA(n) + a ribonucleoside 5'-triphosphate = RNA(n+1) + diphosphate. Its function is as follows. DNA-dependent RNA polymerase catalyzes the transcription of DNA into RNA using the four ribonucleoside triphosphates as substrates. Second largest core component of RNA polymerase III which synthesizes small RNAs, such as 5S rRNA and tRNAs. Proposed to contribute to the polymerase catalytic activity and forms the polymerase active center together with the largest subunit. Pol III is composed of mobile elements and Polr3B is part of the core element with the central large cleft and probably a clamp element that moves to open and close the cleft. This chain is DNA-directed RNA polymerase III subunit RPC2, found in Drosophila melanogaster (Fruit fly).